We begin with the raw amino-acid sequence, 331 residues long: Putative lipoprotein YerB (331 aa).

The N-terminal stretch at 1–19 is a signal peptide; sequence MKKWMTVCALCFVFFLLVS. Cys-20 carries the N-palmitoyl cysteine lipid modification. The S-diacylglycerol cysteine moiety is linked to residue Cys-20. A Phosphothreonine modification is found at Thr-97. Ser-103 is modified (phosphoserine).

In terms of assembly, interacts with PcrA. The interaction is not essential for cell viability or repair of UV-induced lesions.

Its subcellular location is the cell membrane. The polypeptide is Putative lipoprotein YerB (yerB) (Bacillus subtilis (strain 168)).